We begin with the raw amino-acid sequence, 144 residues long: 6-pyruvoyl tetrahydrobiopterin synthase (144 aa).

Positions 1-4 (MNAA) are excised as a propeptide. Ser18 is subject to Phosphoserine. A Zn(2+)-binding site is contributed by His23. At Ser27 the chain carries Phosphoserine. The Proton acceptor role is filled by Cys42. Positions 48 and 50 each coordinate Zn(2+). The active-site Charge relay system is the His89. Tyr127 bears the Phosphotyrosine mark. The active-site Charge relay system is the Glu133.

It belongs to the PTPS family. As to quaternary structure, homohexamer formed of two homotrimers in a head to head fashion. The cofactor is Zn(2+). In terms of processing, phosphorylation of Ser-18 is required for maximal enzyme activity.

The catalysed reaction is 7,8-dihydroneopterin 3'-triphosphate = 6-pyruvoyl-5,6,7,8-tetrahydropterin + triphosphate + H(+). The protein operates within cofactor biosynthesis; tetrahydrobiopterin biosynthesis; tetrahydrobiopterin from 7,8-dihydroneopterin triphosphate: step 1/3. Functionally, involved in the biosynthesis of tetrahydrobiopterin, an essential cofactor of aromatic amino acid hydroxylases. Catalyzes the transformation of 7,8-dihydroneopterin triphosphate into 6-pyruvoyl tetrahydropterin. This chain is 6-pyruvoyl tetrahydrobiopterin synthase (Pts), found in Rattus norvegicus (Rat).